Reading from the N-terminus, the 407-residue chain is Na(+)-translocating NADH-quinone reductase subunit F (407 aa).

A helical membrane pass occupies residues 3–23; that stretch reads IILGVVMFTLIVLALVLVILF. Residues 32–126 form the 2Fe-2S ferredoxin-type domain; sequence GDITISVNDD…DMDIELPEEI (95 aa). Residues Cys69, Cys75, Cys78, and Cys110 each contribute to the [2Fe-2S] cluster site. Positions 129–269 constitute an FAD-binding FR-type domain; it reads VKKWECTVIS…SGPFGEFFAK (141 aa). The segment at 272–389 is catalytic; sequence DAEMVFVGGG…PMMNAAVIGM (118 aa).

It belongs to the NqrF family. In terms of assembly, composed of six subunits; NqrA, NqrB, NqrC, NqrD, NqrE and NqrF. Requires [2Fe-2S] cluster as cofactor. FAD serves as cofactor.

The protein localises to the cell inner membrane. The catalysed reaction is a ubiquinone + n Na(+)(in) + NADH + H(+) = a ubiquinol + n Na(+)(out) + NAD(+). In terms of biological role, NQR complex catalyzes the reduction of ubiquinone-1 to ubiquinol by two successive reactions, coupled with the transport of Na(+) ions from the cytoplasm to the periplasm. The first step is catalyzed by NqrF, which accepts electrons from NADH and reduces ubiquinone-1 to ubisemiquinone by a one-electron transfer pathway. The chain is Na(+)-translocating NADH-quinone reductase subunit F from Vibrio campbellii (strain ATCC BAA-1116).